A 99-amino-acid polypeptide reads, in one-letter code: Protein S100-A11 (99 aa).

Methionine 1 is subject to N-acetylmethionine. Threonine 8 is subject to Phosphothreonine. EF-hand domains are found at residues 10–47 (RCIESLIAIFQKHAGRDGNNTKISKTEFLIFMNTELAA) and 53–88 (KDPGVLDRMMKKLDLDSDGQLDFQEFLNLIGGLAIA). Ca(2+)-binding residues include asparagine 29, lysine 31, glutamate 36, aspartate 66, aspartate 68, aspartate 70, glutamine 72, and glutamate 77.

It belongs to the S-100 family. In terms of assembly, homodimer; disulfide-linked. Post-translationally, phosphorylation at Thr-8 significantly suppresses homodimerization and promotes association with NCL/nucleolin which induces nuclear translocation.

The protein localises to the cytoplasm. It is found in the nucleus. Facilitates the differentiation and the cornification of keratinocytes. The polypeptide is Protein S100-A11 (S100A11) (Sus scrofa (Pig)).